A 113-amino-acid chain; its full sequence is Ribonuclease P protein component (113 aa).

It belongs to the RnpA family. Consists of a catalytic RNA component (M1 or rnpB) and a protein subunit.

It catalyses the reaction Endonucleolytic cleavage of RNA, removing 5'-extranucleotides from tRNA precursor.. In terms of biological role, RNaseP catalyzes the removal of the 5'-leader sequence from pre-tRNA to produce the mature 5'-terminus. It can also cleave other RNA substrates such as 4.5S RNA. The protein component plays an auxiliary but essential role in vivo by binding to the 5'-leader sequence and broadening the substrate specificity of the ribozyme. This Desulforamulus reducens (strain ATCC BAA-1160 / DSM 100696 / MI-1) (Desulfotomaculum reducens) protein is Ribonuclease P protein component.